We begin with the raw amino-acid sequence, 740 residues long: Ethylene receptor 1 (740 aa).

The next 3 helical transmembrane spans lie at 23–43 (ISDF…IYFV), 54–74 (VLVQ…INLW), and 92–112 (VLTA…IPDL). Cu cation contacts are provided by Cys-65 and His-69. One can recognise a GAF domain in the interval 158–307 (DRHTILKTTL…VVADQVAVAL (150 aa)). Residues 350–588 (VMNHEMRTPM…TFIVKLGIAD (239 aa)) enclose the Histidine kinase domain. His-353 is modified (phosphohistidine; by autocatalysis). One can recognise a Response regulatory domain in the interval 614–731 (KVLVMDDNGV…KMRSVLSELI (118 aa)). Residue Asp-662 is modified to 4-aspartylphosphate.

This sequence belongs to the ethylene receptor family. As to quaternary structure, homodimer; disulfide-linked. The cofactor is Cu cation. In terms of processing, activation probably requires a transfer of a phosphate group between a His in the transmitter domain and an Asp of the receiver domain. In terms of tissue distribution, in seeds and placenta.

It is found in the endoplasmic reticulum membrane. It catalyses the reaction ATP + protein L-histidine = ADP + protein N-phospho-L-histidine.. May act early in the ethylene signal transduction pathway, possibly as an ethylene receptor, or as a regulator of the pathway. This Cucumis melo var. cantalupensis (Netted muskmelon) protein is Ethylene receptor 1 (ETR1).